An 85-amino-acid chain; its full sequence is MKLLLLLVISASMLLECLVNADGYIRKKDGCKVSCIIGNEGCRKECVAHGGSFGYCWTWGLACWCENLPDAVTWKSSTNTCGRKK.

The N-terminal stretch at methionine 1 to alanine 21 is a signal peptide. Residues aspartate 22–glycine 82 enclose the LCN-type CS-alpha/beta domain. Disulfide bonds link cysteine 31–cysteine 81, cysteine 35–cysteine 56, cysteine 42–cysteine 63, and cysteine 46–cysteine 65. A propeptide spans arginine 83 to lysine 85 (removed by a carboxypeptidase).

Belongs to the long (4 C-C) scorpion toxin superfamily. Sodium channel inhibitor family. Beta subfamily. In terms of processing, C-terminal basic residues are removed by a carboxypeptidase. Expressed by the venom gland.

It localises to the secreted. Functionally, depressant insect beta-toxins cause a transient contraction paralysis followed by a slow flaccid paralysis. They bind voltage-independently at site-4 of sodium channels (Nav) and shift the voltage of activation toward more negative potentials thereby affecting sodium channel activation and promoting spontaneous and repetitive firing. This toxin is active only on insects. The sequence is that of Beta-insect depressant toxin BjIT2 from Hottentotta judaicus (Black scorpion).